The sequence spans 111 residues: Large ribosomal subunit protein uL22 (111 aa).

Belongs to the universal ribosomal protein uL22 family. As to quaternary structure, part of the 50S ribosomal subunit.

In terms of biological role, this protein binds specifically to 23S rRNA; its binding is stimulated by other ribosomal proteins, e.g. L4, L17, and L20. It is important during the early stages of 50S assembly. It makes multiple contacts with different domains of the 23S rRNA in the assembled 50S subunit and ribosome. Functionally, the globular domain of the protein is located near the polypeptide exit tunnel on the outside of the subunit, while an extended beta-hairpin is found that lines the wall of the exit tunnel in the center of the 70S ribosome. This Alkalilimnicola ehrlichii (strain ATCC BAA-1101 / DSM 17681 / MLHE-1) protein is Large ribosomal subunit protein uL22.